The chain runs to 264 residues: Hydroxyethylthiazole kinase (264 aa).

Substrate is bound at residue methionine 52. Arginine 127 and threonine 173 together coordinate ATP. Glycine 200 is a binding site for substrate.

The protein belongs to the Thz kinase family. Mg(2+) is required as a cofactor.

The catalysed reaction is 5-(2-hydroxyethyl)-4-methylthiazole + ATP = 4-methyl-5-(2-phosphooxyethyl)-thiazole + ADP + H(+). Its pathway is cofactor biosynthesis; thiamine diphosphate biosynthesis; 4-methyl-5-(2-phosphoethyl)-thiazole from 5-(2-hydroxyethyl)-4-methylthiazole: step 1/1. In terms of biological role, catalyzes the phosphorylation of the hydroxyl group of 4-methyl-5-beta-hydroxyethylthiazole (THZ). The protein is Hydroxyethylthiazole kinase of Serratia proteamaculans (strain 568).